We begin with the raw amino-acid sequence, 318 residues long: Malate dehydrogenase (318 aa).

NAD(+) contacts are provided by residues 11-17 (GAGGNVG) and D37. Substrate is bound by residues R86 and R92. Residues N99 and 122-124 (VTN) each bind NAD(+). Residues N124 and R155 each contribute to the substrate site. H179 acts as the Proton acceptor in catalysis.

Belongs to the LDH/MDH superfamily. MDH type 3 family.

It carries out the reaction (S)-malate + NAD(+) = oxaloacetate + NADH + H(+). Its function is as follows. Catalyzes the reversible oxidation of malate to oxaloacetate. The protein is Malate dehydrogenase of Nitratiruptor sp. (strain SB155-2).